The sequence spans 202 residues: 3-isopropylmalate dehydratase small subunit (202 aa).

It belongs to the LeuD family. LeuD type 1 subfamily. As to quaternary structure, heterodimer of LeuC and LeuD.

The enzyme catalyses (2R,3S)-3-isopropylmalate = (2S)-2-isopropylmalate. It functions in the pathway amino-acid biosynthesis; L-leucine biosynthesis; L-leucine from 3-methyl-2-oxobutanoate: step 2/4. Its function is as follows. Catalyzes the isomerization between 2-isopropylmalate and 3-isopropylmalate, via the formation of 2-isopropylmaleate. The polypeptide is 3-isopropylmalate dehydratase small subunit (Nocardia farcinica (strain IFM 10152)).